The primary structure comprises 436 residues: Glutamyl-tRNA reductase (436 aa).

Residues 49–52 (TCNR), serine 109, 114–116 (EGQ), and glutamine 120 contribute to the substrate site. The active-site Nucleophile is the cysteine 50. 198–203 (GAGRMS) provides a ligand contact to NADP(+).

It belongs to the glutamyl-tRNA reductase family. Homodimer.

The enzyme catalyses (S)-4-amino-5-oxopentanoate + tRNA(Glu) + NADP(+) = L-glutamyl-tRNA(Glu) + NADPH + H(+). Its pathway is porphyrin-containing compound metabolism; protoporphyrin-IX biosynthesis; 5-aminolevulinate from L-glutamyl-tRNA(Glu): step 1/2. It functions in the pathway porphyrin-containing compound metabolism; chlorophyll biosynthesis. Functionally, catalyzes the NADPH-dependent reduction of glutamyl-tRNA(Glu) to glutamate 1-semialdehyde (GSA). In Prochlorococcus marinus (strain MIT 9303), this protein is Glutamyl-tRNA reductase.